A 489-amino-acid polypeptide reads, in one-letter code: N-succinylglutamate 5-semialdehyde dehydrogenase 1 (489 aa).

Position 223 to 228 (223 to 228) interacts with NAD(+); sequence GSSRTG. Active-site residues include Glu-246 and Cys-280.

Belongs to the aldehyde dehydrogenase family. AstD subfamily.

It carries out the reaction N-succinyl-L-glutamate 5-semialdehyde + NAD(+) + H2O = N-succinyl-L-glutamate + NADH + 2 H(+). The protein operates within amino-acid degradation; L-arginine degradation via AST pathway; L-glutamate and succinate from L-arginine: step 4/5. Functionally, catalyzes the NAD-dependent reduction of succinylglutamate semialdehyde into succinylglutamate. This is N-succinylglutamate 5-semialdehyde dehydrogenase 1 from Pseudoalteromonas translucida (strain TAC 125).